We begin with the raw amino-acid sequence, 125 residues long: MSGRGKGKAKGTKSKTRSSRAGLQFPVGRVHRFLKKGNYGSRVGAGAPVYLAAVLEYLTAEILELAGNAARDNKKSRIIPRHLQLAVRNDEELNKLLGGVTIAQGGVLPNIQAVLLPKKTAKASK.

Positions 1-18 (MSGRGKGKAKGTKSKTRS) are enriched in basic residues. The disordered stretch occupies residues 1 to 21 (MSGRGKGKAKGTKSKTRSSRA). Serine 2 is subject to N-acetylserine. Residue serine 2 is modified to Phosphoserine. Position 104 is an N5-methylglutamine (glutamine 104). Residue lysine 119 forms a Glycyl lysine isopeptide (Lys-Gly) (interchain with G-Cter in ubiquitin) linkage.

It belongs to the histone H2A family. The nucleosome is a histone octamer containing two molecules each of H2A, H2B, H3 and H4 assembled in one H3-H4 heterotetramer and two H2A-H2B heterodimers. The octamer wraps approximately 147 bp of DNA. Post-translationally, monoubiquitination of Lys-119 gives a specific tag for epigenetic transcriptional repression. In terms of processing, phosphorylation of Ser-2 directly represses transcription.

It localises to the nucleus. It is found in the chromosome. In terms of biological role, core component of nucleosome. Nucleosomes wrap and compact DNA into chromatin, limiting DNA accessibility to the cellular machineries which require DNA as a template. Histones thereby play a central role in transcription regulation, DNA repair, DNA replication and chromosomal stability. DNA accessibility is regulated via a complex set of post-translational modifications of histones, also called histone code, and nucleosome remodeling. The chain is Late histone H2A.1 from Psammechinus miliaris (Green sea urchin).